Reading from the N-terminus, the 426-residue chain is MRAWPRPVVPAVAGEPPVPTLFDTSAGSVRPAECTGDGRVGLYVCGITPYDATHIGHASTYLAFDTLQRVWLDRGYDVAYVQNVTDVDDPLLERATATGVDWRDLAAEQVELFRTDMEALRILPPDSYVGVTEVVDEVAAAVAELVRRGTAYPVATPDAAQPGARDLYFDVARAGADGPWALGDESGYDRDTMAALSAERGGDPERPGKRDPLDPLLWRAERADEPAWDSAVGRGRPGWHIECAVIALRKLDRPVTVQGGGSDLIFPHHEMSAGHAAALTGEDFACVYAHSGMVAYQGEKMSKSLGNLVLVSRLRAAGVDPRAIRLALLAQHYRADWEWTDALLAESVARLAAWDAWAADAASTDADAGEPGELVQLVRERLADDLDTPGAILLLDLRVATGVPATPVEVAAVDALLGVALGSPAA.

Cys45 lines the Zn(2+) pocket. L-cysteinyl-5'-AMP is bound by residues 45–48, Thr60, and 83–85; these read CGIT and NVT. The short motif at 47–57 is the 'HIGH' region element; that stretch reads ITPYDATHIGH. The 'ERGGDP' region motif lies at 199 to 204; it reads ERGGDP. Trp239 is a binding site for L-cysteinyl-5'-AMP. Cys243 serves as a coordination point for Zn(2+). 261–263 serves as a coordination point for L-cysteinyl-5'-AMP; sequence GSD. His268 contributes to the Zn(2+) binding site. L-cysteinyl-5'-AMP is bound at residue Val294. The 'KMSKS' region signature appears at 300–304; sequence KMSKS.

This sequence belongs to the class-I aminoacyl-tRNA synthetase family. MshC subfamily. As to quaternary structure, monomer. Zn(2+) serves as cofactor.

It carries out the reaction 1D-myo-inositol 2-amino-2-deoxy-alpha-D-glucopyranoside + L-cysteine + ATP = 1D-myo-inositol 2-(L-cysteinylamino)-2-deoxy-alpha-D-glucopyranoside + AMP + diphosphate + H(+). Its function is as follows. Catalyzes the ATP-dependent condensation of GlcN-Ins and L-cysteine to form L-Cys-GlcN-Ins. The protein is L-cysteine:1D-myo-inositol 2-amino-2-deoxy-alpha-D-glucopyranoside ligase of Clavibacter michiganensis subsp. michiganensis (strain NCPPB 382).